Reading from the N-terminus, the 518-residue chain is ATP synthase subunit beta 2 (518 aa).

154-161 provides a ligand contact to ATP; the sequence is GGAGVGKT. The disordered stretch occupies residues 455 to 518; sequence IDEAKGKAKP…TDHAADTHES (64 aa). Composition is skewed to basic and acidic residues over residues 473–485 and 507–518; these read PDSK…DPKP and PETDHAADTHES.

Belongs to the ATPase alpha/beta chains family. In terms of assembly, F-type ATPases have 2 components, CF(1) - the catalytic core - and CF(0) - the membrane proton channel. CF(1) has five subunits: alpha(3), beta(3), gamma(1), delta(1), epsilon(1). CF(0) has three main subunits: a(1), b(2) and c(9-12). The alpha and beta chains form an alternating ring which encloses part of the gamma chain. CF(1) is attached to CF(0) by a central stalk formed by the gamma and epsilon chains, while a peripheral stalk is formed by the delta and b chains.

It localises to the cell inner membrane. It carries out the reaction ATP + H2O + 4 H(+)(in) = ADP + phosphate + 5 H(+)(out). Produces ATP from ADP in the presence of a proton gradient across the membrane. The catalytic sites are hosted primarily by the beta subunits. The chain is ATP synthase subunit beta 2 from Albidiferax ferrireducens (strain ATCC BAA-621 / DSM 15236 / T118) (Rhodoferax ferrireducens).